The chain runs to 657 residues: Glycogen debranching enzyme (657 aa).

Asp336 acts as the Nucleophile in catalysis. The active-site Proton donor is the Glu371. The tract at residues 460 to 479 (ANGEENRDGTNNNYSNNHGK) is disordered.

The protein belongs to the glycosyl hydrolase 13 family.

The catalysed reaction is Hydrolysis of (1-&gt;6)-alpha-D-glucosidic linkages to branches with degrees of polymerization of three or four glucose residues in limit dextrin.. The protein operates within glycan degradation; glycogen degradation. Removes maltotriose and maltotetraose chains that are attached by 1,6-alpha-linkage to the limit dextrin main chain, generating a debranched limit dextrin. This chain is Glycogen debranching enzyme, found in Escherichia coli O6:K15:H31 (strain 536 / UPEC).